The following is a 266-amino-acid chain: Glucosamine-6-phosphate deaminase (266 aa).

The active-site Proton acceptor; for enolization step is the D72. Residue D141 is the For ring-opening step of the active site. H143 acts as the Proton acceptor; for ring-opening step in catalysis. E148 (for ring-opening step) is an active-site residue.

Belongs to the glucosamine/galactosamine-6-phosphate isomerase family. NagB subfamily. In terms of assembly, homohexamer; trimer of disulfide-linked dimers.

It catalyses the reaction alpha-D-glucosamine 6-phosphate + H2O = beta-D-fructose 6-phosphate + NH4(+). The protein operates within amino-sugar metabolism; N-acetylneuraminate degradation; D-fructose 6-phosphate from N-acetylneuraminate: step 5/5. Allosterically activated by N-acetylglucosamine 6-phosphate (GlcNAc6P). Its function is as follows. Catalyzes the reversible isomerization-deamination of glucosamine 6-phosphate (GlcN6P) to form fructose 6-phosphate (Fru6P) and ammonium ion. The protein is Glucosamine-6-phosphate deaminase of Escherichia coli O6:H1 (strain CFT073 / ATCC 700928 / UPEC).